Here is a 356-residue protein sequence, read N- to C-terminus: Glutamine synthetase N-1 (356 aa).

Residues 19-99 (VIAEYIWVGG…VMCDAYTPAG (81 aa)) enclose the GS beta-grasp domain. The region spanning 106-356 (KRHNAAKIFS…IAETTLLWKP (251 aa)) is the GS catalytic domain.

The protein belongs to the glutamine synthetase family. Homooctamer. As to expression, this is a nodule isozyme.

It is found in the cytoplasm. It catalyses the reaction L-glutamate + NH4(+) + ATP = L-glutamine + ADP + phosphate + H(+). The polypeptide is Glutamine synthetase N-1 (Gln-gamma) (Phaseolus vulgaris (Kidney bean)).